The chain runs to 134 residues: Putative esterase PA0474 (134 aa).

This sequence belongs to the thioesterase PaaI family.

The protein is Putative esterase PA0474 of Pseudomonas aeruginosa (strain ATCC 15692 / DSM 22644 / CIP 104116 / JCM 14847 / LMG 12228 / 1C / PRS 101 / PAO1).